Here is a 140-residue protein sequence, read N- to C-terminus: Ribosome-binding factor A (140 aa).

Residues 116 to 140 (RERQERGEIPPGSDDAQNCHDDEPS) form a disordered region.

This sequence belongs to the RbfA family. In terms of assembly, monomer. Binds 30S ribosomal subunits, but not 50S ribosomal subunits or 70S ribosomes.

It is found in the cytoplasm. In terms of biological role, one of several proteins that assist in the late maturation steps of the functional core of the 30S ribosomal subunit. Associates with free 30S ribosomal subunits (but not with 30S subunits that are part of 70S ribosomes or polysomes). Required for efficient processing of 16S rRNA. May interact with the 5'-terminal helix region of 16S rRNA. The chain is Ribosome-binding factor A from Synechococcus sp. (strain WH7803).